The sequence spans 155 residues: Endoribonuclease YbeY (155 aa).

Histidine 114, histidine 118, and histidine 124 together coordinate Zn(2+).

It belongs to the endoribonuclease YbeY family. Requires Zn(2+) as cofactor.

It is found in the cytoplasm. In terms of biological role, single strand-specific metallo-endoribonuclease involved in late-stage 70S ribosome quality control and in maturation of the 3' terminus of the 16S rRNA. This chain is Endoribonuclease YbeY, found in Citrobacter koseri (strain ATCC BAA-895 / CDC 4225-83 / SGSC4696).